The following is a 204-amino-acid chain: N-(5'-phosphoribosyl)anthranilate isomerase (204 aa).

This sequence belongs to the TrpF family.

The enzyme catalyses N-(5-phospho-beta-D-ribosyl)anthranilate = 1-(2-carboxyphenylamino)-1-deoxy-D-ribulose 5-phosphate. It functions in the pathway amino-acid biosynthesis; L-tryptophan biosynthesis; L-tryptophan from chorismate: step 3/5. This is N-(5'-phosphoribosyl)anthranilate isomerase from Bacillus cereus (strain AH820).